The sequence spans 271 residues: Methyltransferase psoC (271 aa).

The protein belongs to the methyltransferase superfamily. LaeA methyltransferase family.

The protein operates within secondary metabolite biosynthesis. Functionally, methyltransferase; part of the gene cluster that mediates the biosynthesis of pseurotin A, a competitive inhibitor of chitin synthase and an inducer of nerve-cell proliferation. The PKS-NRPS hybrid synthetase psoA is responsible for the biosynthesis of azaspirene, one of the first intermediates having the 1-oxa-7-azaspiro[4,4]-non-2-ene-4,6-dione core of pseurotin, via condensation of one acetyl-CoA, 4 malonyl-CoA, and a L-phenylalanine molecule. The dual-functional monooxygenase/methyltransferase psoF seems to be involved in the addition of the C3 methyl group onto the pseurotin scaffold. Azaspirene is then converted to synerazol through 4 steps including oxidation of C17 by the cytochrome P450 monooxygenase psoD, O-methylation of the hydroxy group of C8 by the methyltransferase psoC, and the trans-to-cis isomerization of the C13 olefin by the glutathione S-transferase psoE. The fourth step of synerazol production is performed by the dual-functional monooxygenase/methyltransferase psoF which seems to catalyze the epoxidation of the intermediate deepoxy-synerazol. Synerazol can be attacked by a water molecule nonenzymatically at two different positions to yield two diol products, pseurotin A and pseurotin D. The polypeptide is Methyltransferase psoC (Aspergillus fumigatus (strain ATCC MYA-4609 / CBS 101355 / FGSC A1100 / Af293) (Neosartorya fumigata)).